Reading from the N-terminus, the 24-residue chain is Brevinin-1PTa (24 aa).

An intrachain disulfide couples Cys18 to Cys24.

As to expression, expressed by the skin glands.

It localises to the secreted. Functionally, has antibacterial activity against the Gram-positive bacterium S.aureus ATCC 25923 (MIC=3 uM) and the Gram-negative bacterium E.coli ATCC 25726 (MIC=24 uM). The protein is Brevinin-1PTa of Pulchrana picturata (Malaysian fire frog).